Reading from the N-terminus, the 188-residue chain is Elongation factor P (188 aa).

It belongs to the elongation factor P family.

It localises to the cytoplasm. The protein operates within protein biosynthesis; polypeptide chain elongation. Its function is as follows. Involved in peptide bond synthesis. Stimulates efficient translation and peptide-bond synthesis on native or reconstituted 70S ribosomes in vitro. Probably functions indirectly by altering the affinity of the ribosome for aminoacyl-tRNA, thus increasing their reactivity as acceptors for peptidyl transferase. This chain is Elongation factor P, found in Cereibacter sphaeroides (strain KD131 / KCTC 12085) (Rhodobacter sphaeroides).